Consider the following 1348-residue polypeptide: Adhesion G protein-coupled receptor F5 (1348 aa).

The first 21 residues, 1 to 21, serve as a signal peptide directing secretion; the sequence is MRSPRTFTFYFLLLVICSSEA. At 22 to 1019 the chain is on the extracellular side; sequence ALSTPTEPIV…LKILLDIISY (998 aa). Positions 163–271 constitute an SEA domain; that stretch reads PEAFITLKLK…NSFQGTPSNE (109 aa). 3 consecutive Ig-like domains span residues 268–366, 367–464, and 469–559; these read PSNE…LDVT, PIRI…IAVT, and ANLT…KDVT. Asn-270, Asn-286, Asn-337, and Asn-349 each carry an N-linked (GlcNAc...) asparagine glycan. A disulfide bridge connects residues Cys-291 and Cys-348. The cysteines at positions 389 and 447 are disulfide-linked. Residues Asn-470, Asn-538, and Asn-665 are each glycosylated (N-linked (GlcNAc...) asparagine). Cys-490 and Cys-543 are oxidised to a cystine. At Ser-818 the chain carries Phosphoserine. The GAIN-B domain maps to 841-1005; that stretch reads TPPFLAHPNV…SILMSPDSPD (165 aa). Cystine bridges form between Cys-953–Cys-987 and Cys-972–Cys-989. Residues 953 to 1005 are GPS; sequence CVFWNFSLANNTGGWDSSGCSVEDDGRDNRDRVFCKCNHLTSFSILMSPDSPD. The tract at residues 993–1008 is tethered agonist; that stretch reads TSFSILMSPDSPDPGS. Residues 1020-1040 form a helical membrane-spanning segment; the sequence is IGLGFSIVSLAACLVVEAMVW. Topologically, residues 1041 to 1055 are cytoplasmic; the sequence is KSVTKNRTSYMRHIC. The helical transmembrane segment at 1056–1076 threads the bilayer; sequence IVNIAFCLLIADIWFIVAGAI. At 1077 to 1092 the chain is on the extracellular side; the sequence is HDGRYPLNETACVAAT. A helical transmembrane segment spans residues 1093–1113; that stretch reads FFIHFFYLSVFFWMLTLGLML. The Cytoplasmic portion of the chain corresponds to 1114-1130; the sequence is FYRLIFILHDASKSTQK. A helical transmembrane segment spans residues 1131–1151; the sequence is AIAFSLGYGCPLIISSITVGV. Residues 1152–1175 lie on the Extracellular side of the membrane; the sequence is TQPQEVYMRKNACWLNWEDTRALL. Residues 1176–1196 traverse the membrane as a helical segment; that stretch reads AFAIPALIIVVVNVSITVVVI. Residues 1197–1221 lie on the Cytoplasmic side of the membrane; that stretch reads TKILRPSIGDKPGKQEKSSLFQISK. Residues 1222 to 1242 traverse the membrane as a helical segment; that stretch reads SIGVLTPLLGLTWGFGLATVI. Topologically, residues 1243–1250 are extracellular; that stretch reads QGSNAVFH. The helical transmembrane segment at 1251–1271 threads the bilayer; the sequence is IIFTLLNAFQGLFILLFGCLW. Residues 1272–1348 lie on the Cytoplasmic side of the membrane; it reads DQKVQEALLH…NSSSAYSLLN (77 aa). Position 1302 is a phosphothreonine (Thr-1302). Residue Ser-1309 is modified to Phosphoserine. The segment at 1328 to 1348 is disordered; that stretch reads STPETTSSSLENSSSAYSLLN.

This sequence belongs to the G-protein coupled receptor 2 family. Adhesion G-protein coupled receptor (ADGR) subfamily. As to quaternary structure, homodimer; disulfide-linked. Heterodimer of 2 chains generated by proteolytic processing; the large extracellular N-terminal fragment and the membrane-bound C-terminal fragment predominantly remain associated and non-covalently linked. Fragment generates by the processing enzyme furin remains attached to the extracellular N-terminal fragment. Interacts (via N-terminal extracellular domain) with SFTPD. In terms of processing, highly glycosylated. Proteolytically cleaved at multiple sites: one in the GPS region of the GAIN-B domain (S1 site) and the other in the SEA domain (S2 site). The proteolytic cleavage at S1 site generates an extracellular subunit and a seven-transmembrane subunit. The proteolytic cleavage at S2 site generates a fragment that undergoes proteolytic cleavage by the processing enzyme furin. Widely expressed, with highest levels in lung, pancreas, kidney and heart. In the kidney, expressed more abundantly in the medulla than in the cortex, predominantly expressed in A-intercalated cells (at protein level). Expressed in endothelial cells from various tissues, including brain, heart, kidney, liver, lung and muscle. In the lung, expressed in alveolar type II (ATII) cells (at protein level). Expressed in pancreatic islets of Langerhans, predominantly in delta cells, as well as in endothelial cells. Expressed in white adipose tissue.

The protein localises to the cell membrane. Its activity is regulated as follows. As an adhesion G protein-coupled receptor (aGPCR) exhibits a large N-terminal extracellular domain containing highly conserved GPCR autoproteolysis-inducing (GAIN) domain. During synthesis, intracellular autoproteolytic processing of nascent chain within the GAIN domain generates a mature protein, consisting of an N-terminal fragment that is non-covalently linked to the C-terminal fragment. The mature protein is routed to the plasma membrane where the N- and C-terminal fragments remain associated, forming the holoreceptor. Dissociation of the aGPCR fragments stimulates G protein signaling through the action of the tethered-peptide agonist stalk that is occluded within the GAIN domain in the holoreceptor form. This dissociation might be induced by ligand binding, such as that of sFNDC4. Its function is as follows. Adhesion G protein-coupled receptor. In alveolar type II (ATII or AT2) cells, required for normal lung surfactant homeostasis. Modulation of both surfactant secretion and uptake by ATII cells is mediated by the downstream activation of GNAQ/GNA11 proteins and may be a consequence of increased cortical F-actin assembly induced by ADGRF5 activation. In the kidney, may play a role in the regulation of acid excretion into the primary urine, possibly by regulating the surface expression of V-ATPase proton pump. As a receptor for soluble FNDC4 (sFNDC4), required for proper systemic glucose tolerance, specifically sensitizing white adipose tissue to insulin. Also plays a role in sFNDC4-induced decrease of local inflammation in white adipose tissue. The sequence is that of Adhesion G protein-coupled receptor F5 (Adgrf5) from Mus musculus (Mouse).